A 120-amino-acid chain; its full sequence is NAD(P)H-quinone oxidoreductase subunit 3, chloroplastic (120 aa).

The next 3 membrane-spanning stretches (helical) occupy residues 9–29, 64–84, and 88–108; these read IFWA…LLSG, MFAL…PWAM, and VLGV…IVGL.

Belongs to the complex I subunit 3 family. As to quaternary structure, NDH is composed of at least 16 different subunits, 5 of which are encoded in the nucleus.

It localises to the plastid. Its subcellular location is the chloroplast thylakoid membrane. The catalysed reaction is a plastoquinone + NADH + (n+1) H(+)(in) = a plastoquinol + NAD(+) + n H(+)(out). The enzyme catalyses a plastoquinone + NADPH + (n+1) H(+)(in) = a plastoquinol + NADP(+) + n H(+)(out). Functionally, NDH shuttles electrons from NAD(P)H:plastoquinone, via FMN and iron-sulfur (Fe-S) centers, to quinones in the photosynthetic chain and possibly in a chloroplast respiratory chain. The immediate electron acceptor for the enzyme in this species is believed to be plastoquinone. Couples the redox reaction to proton translocation, and thus conserves the redox energy in a proton gradient. The protein is NAD(P)H-quinone oxidoreductase subunit 3, chloroplastic of Fagopyrum esculentum subsp. ancestrale (Wild buckwheat).